The sequence spans 194 residues: Dephospho-CoA kinase (194 aa).

The DPCK domain occupies 3–194 (IVGLTGSIGM…RAIVDDLRAG (192 aa)). 11-16 (GMGKST) contributes to the ATP binding site.

The protein belongs to the CoaE family.

It is found in the cytoplasm. The enzyme catalyses 3'-dephospho-CoA + ATP = ADP + CoA + H(+). Its pathway is cofactor biosynthesis; coenzyme A biosynthesis; CoA from (R)-pantothenate: step 5/5. Its function is as follows. Catalyzes the phosphorylation of the 3'-hydroxyl group of dephosphocoenzyme A to form coenzyme A. The chain is Dephospho-CoA kinase from Rhizobium meliloti (strain 1021) (Ensifer meliloti).